Reading from the N-terminus, the 60-residue chain is uncharacterized protein (60 aa).

The helical transmembrane segment at 11 to 33 threads the bilayer; the sequence is VFTVGFITGGVTPVMVSFVWPAA. Residues Asn-40 and Asn-57 are each glycosylated (N-linked (GlcNAc...) asparagine; by host).

The protein resides in the host membrane. This is an uncharacterized protein from African swine fever virus (strain Badajoz 1971 Vero-adapted) (Ba71V).